Here is a 635-residue protein sequence, read N- to C-terminus: Threonine--tRNA ligase (635 aa).

The TGS domain occupies 1-61; it reads MIKITLKDGK…HKDSSLEILT (61 aa). Residues 242–532 form a catalytic region; that stretch reads DHRKLGKELD…LIEQYAGAFP (291 aa). Residues Cys333, His384, and His509 each coordinate Zn(2+).

The protein belongs to the class-II aminoacyl-tRNA synthetase family. Homodimer. The cofactor is Zn(2+).

Its subcellular location is the cytoplasm. The catalysed reaction is tRNA(Thr) + L-threonine + ATP = L-threonyl-tRNA(Thr) + AMP + diphosphate + H(+). Its function is as follows. Catalyzes the attachment of threonine to tRNA(Thr) in a two-step reaction: L-threonine is first activated by ATP to form Thr-AMP and then transferred to the acceptor end of tRNA(Thr). Also edits incorrectly charged L-seryl-tRNA(Thr). This chain is Threonine--tRNA ligase, found in Clostridium botulinum (strain Kyoto / Type A2).